We begin with the raw amino-acid sequence, 260 residues long: MNTGHGTGQQIHPIVRVPFSAGVPLIEATFAARSGQFLVEAQMGGRMVRAHVADRGRLVDLLVPGARLLLAPREEVGRKTAFQVVAVYQDSDLVSLDTQLPNRLVAAALSLRALPQFARYGTVQREVQLGPHRIDFRLSEGLDTCLLEVKSVTRVIDGVAVFPDAPTERGSQHLELLTNAARNGQRAAVVFIIQRSQGVAFAPDETIDRAFSRALRTARALGVEIYAYLCPVTPTGITLGHEVPVFMSLSAVPSELRRRL.

This sequence belongs to the SfsA family.

In Chloroflexus aggregans (strain MD-66 / DSM 9485), this protein is Sugar fermentation stimulation protein homolog.